The primary structure comprises 468 residues: Tissue alpha-L-fucosidase (468 aa).

Positions 1–22 are cleaved as a signal peptide; it reads MRSWVVGARLLLLLQLVLVLGA. T173 bears the Phosphothreonine mark. N-linked (GlcNAc...) asparagine glycosylation is found at N244, N271, and N320.

Belongs to the glycosyl hydrolase 29 family. Homotetramer.

The protein localises to the lysosome. The catalysed reaction is an alpha-L-fucoside + H2O = L-fucose + an alcohol. It carries out the reaction a neolactoside IV(2)-alpha-Fuc-nLc4Cer(d18:1(4E)) + H2O = a neolactoside nLc4Cer(d18:1(4E)) + L-fucose. It catalyses the reaction a neolactoside IV(2)-alpha-Fuc-nLc4Cer(d18:0) + H2O = a neolactoside nLc4Cer(d18:0) + L-fucose. Its function is as follows. Alpha-L-fucosidase is responsible for hydrolyzing the alpha-1,6-linked fucose joined to the reducing-end N-acetylglucosamine of the carbohydrate moieties of glycoproteins. This Bos taurus (Bovine) protein is Tissue alpha-L-fucosidase (FUCA1).